The sequence spans 305 residues: UDP-N-acetylenolpyruvoylglucosamine reductase 2 (305 aa).

The FAD-binding PCMH-type domain occupies 33–197 (VGGKADVFVA…LEARFELEEG (165 aa)). Residue Arg176 is part of the active site. The active-site Proton donor is Ser226. Residue Glu296 is part of the active site.

This sequence belongs to the MurB family. The cofactor is FAD.

The protein localises to the cytoplasm. The catalysed reaction is UDP-N-acetyl-alpha-D-muramate + NADP(+) = UDP-N-acetyl-3-O-(1-carboxyvinyl)-alpha-D-glucosamine + NADPH + H(+). It participates in cell wall biogenesis; peptidoglycan biosynthesis. Its function is as follows. Cell wall formation. The polypeptide is UDP-N-acetylenolpyruvoylglucosamine reductase 2 (Bacillus cereus (strain ZK / E33L)).